A 338-amino-acid chain; its full sequence is Holliday junction branch migration complex subunit RuvB (338 aa).

A large ATPase domain (RuvB-L) region spans residues 1-181 (MTTRTISPEK…FGVISRLEFY (181 aa)). ATP is bound by residues Leu-20, Arg-21, Gly-62, Lys-65, Thr-66, Thr-67, 128–130 (EDF), Arg-171, Tyr-181, and Arg-218. A Mg(2+)-binding site is contributed by Thr-66. The interval 182–252 (TDAELSTIVT…VVDESLKLLE (71 aa)) is small ATPAse domain (RuvB-S). The interval 255-338 (EKGFDQMDRT…APAPGQGALF (84 aa)) is head domain (RuvB-H). Residues Arg-291, Arg-310, and Arg-315 each coordinate DNA.

The protein belongs to the RuvB family. Homohexamer. Forms an RuvA(8)-RuvB(12)-Holliday junction (HJ) complex. HJ DNA is sandwiched between 2 RuvA tetramers; dsDNA enters through RuvA and exits via RuvB. An RuvB hexamer assembles on each DNA strand where it exits the tetramer. Each RuvB hexamer is contacted by two RuvA subunits (via domain III) on 2 adjacent RuvB subunits; this complex drives branch migration. In the full resolvosome a probable DNA-RuvA(4)-RuvB(12)-RuvC(2) complex forms which resolves the HJ.

It is found in the cytoplasm. It carries out the reaction ATP + H2O = ADP + phosphate + H(+). In terms of biological role, the RuvA-RuvB-RuvC complex processes Holliday junction (HJ) DNA during genetic recombination and DNA repair, while the RuvA-RuvB complex plays an important role in the rescue of blocked DNA replication forks via replication fork reversal (RFR). RuvA specifically binds to HJ cruciform DNA, conferring on it an open structure. The RuvB hexamer acts as an ATP-dependent pump, pulling dsDNA into and through the RuvAB complex. RuvB forms 2 homohexamers on either side of HJ DNA bound by 1 or 2 RuvA tetramers; 4 subunits per hexamer contact DNA at a time. Coordinated motions by a converter formed by DNA-disengaged RuvB subunits stimulates ATP hydrolysis and nucleotide exchange. Immobilization of the converter enables RuvB to convert the ATP-contained energy into a lever motion, pulling 2 nucleotides of DNA out of the RuvA tetramer per ATP hydrolyzed, thus driving DNA branch migration. The RuvB motors rotate together with the DNA substrate, which together with the progressing nucleotide cycle form the mechanistic basis for DNA recombination by continuous HJ branch migration. Branch migration allows RuvC to scan DNA until it finds its consensus sequence, where it cleaves and resolves cruciform DNA. The sequence is that of Holliday junction branch migration complex subunit RuvB from Geobacter sulfurreducens (strain ATCC 51573 / DSM 12127 / PCA).